The following is a 479-amino-acid chain: PTS system glucose-specific EIICB component (479 aa).

Residues 1–388 (MFKNAFSNLQ…FNLKTPGREK (388 aa)) form the PTS EIIC type-1 domain. 9 consecutive transmembrane segments (helical) span residues 15 to 35 (SLML…IGSA), 51 to 71 (AGSS…ALGF), 80 to 100 (LAAV…IPIF), 112 to 132 (YLLD…AYIF), 152 to 172 (FVPI…SIIW), 252 to 272 (GGFI…WHCA), 280 to 300 (IGGI…TEPI), 305 to 325 (ILVA…AFPI), and 356 to 376 (LFPI…YFMI). The region spanning 399–479 (KETALLVISI…IDNYMSNTNQ (81 aa)) is the PTS EIIB type-1 domain. Cys421 acts as the Phosphocysteine intermediate; for EIIB activity in catalysis. The residue at position 421 (Cys421) is a Phosphocysteine.

The protein resides in the cell inner membrane. The enzyme catalyses N(pros)-phospho-L-histidyl-[protein] + D-glucose(out) = D-glucose 6-phosphate(in) + L-histidyl-[protein]. Functionally, the phosphoenolpyruvate-dependent sugar phosphotransferase system (sugar PTS), a major carbohydrate active transport system, catalyzes the phosphorylation of incoming sugar substrates concomitantly with their translocation across the cell membrane. The enzyme II complex composed of PtsG and Crr is involved in glucose transport. The sequence is that of PTS system glucose-specific EIICB component (ptsG) from Buchnera aphidicola subsp. Baizongia pistaciae (strain Bp).